Reading from the N-terminus, the 200-residue chain is ATP-dependent Clp protease proteolytic subunit (200 aa).

Ser-98 acts as the Nucleophile in catalysis. His-123 is a catalytic residue.

It belongs to the peptidase S14 family. Fourteen ClpP subunits assemble into 2 heptameric rings which stack back to back to give a disk-like structure with a central cavity, resembling the structure of eukaryotic proteasomes.

It localises to the cytoplasm. It carries out the reaction Hydrolysis of proteins to small peptides in the presence of ATP and magnesium. alpha-casein is the usual test substrate. In the absence of ATP, only oligopeptides shorter than five residues are hydrolyzed (such as succinyl-Leu-Tyr-|-NHMec, and Leu-Tyr-Leu-|-Tyr-Trp, in which cleavage of the -Tyr-|-Leu- and -Tyr-|-Trp bonds also occurs).. Functionally, cleaves peptides in various proteins in a process that requires ATP hydrolysis. Has a chymotrypsin-like activity. Plays a major role in the degradation of misfolded proteins. This chain is ATP-dependent Clp protease proteolytic subunit, found in Ehrlichia canis (strain Jake).